A 205-amino-acid polypeptide reads, in one-letter code: Ribosomal RNA small subunit methyltransferase G (205 aa).

S-adenosyl-L-methionine contacts are provided by residues glycine 66, phenylalanine 71, 119 to 120, and arginine 135; that span reads IE.

This sequence belongs to the methyltransferase superfamily. RNA methyltransferase RsmG family.

The protein localises to the cytoplasm. The catalysed reaction is guanosine(527) in 16S rRNA + S-adenosyl-L-methionine = N(7)-methylguanosine(527) in 16S rRNA + S-adenosyl-L-homocysteine. Specifically methylates the N7 position of guanine in position 527 of 16S rRNA. In Rhizobium rhizogenes (strain K84 / ATCC BAA-868) (Agrobacterium radiobacter), this protein is Ribosomal RNA small subunit methyltransferase G.